The chain runs to 239 residues: Ribose-5-phosphate isomerase A (239 aa).

Residues 40–43 (SGST), 96–99 (DGAD), and 110–113 (KGGG) each bind substrate. Residue Glu119 is the Proton acceptor of the active site. Lys137 is a binding site for substrate.

It belongs to the ribose 5-phosphate isomerase family. As to quaternary structure, homodimer.

The catalysed reaction is aldehydo-D-ribose 5-phosphate = D-ribulose 5-phosphate. Its pathway is carbohydrate degradation; pentose phosphate pathway; D-ribose 5-phosphate from D-ribulose 5-phosphate (non-oxidative stage): step 1/1. Catalyzes the reversible conversion of ribose-5-phosphate to ribulose 5-phosphate. This chain is Ribose-5-phosphate isomerase A, found in Methanococcus vannielii (strain ATCC 35089 / DSM 1224 / JCM 13029 / OCM 148 / SB).